The chain runs to 338 residues: Tetraacyldisaccharide 4'-kinase (338 aa).

49 to 56 contacts ATP; that stretch reads TVGGTGKT.

Belongs to the LpxK family.

The catalysed reaction is a lipid A disaccharide + ATP = a lipid IVA + ADP + H(+). The protein operates within glycolipid biosynthesis; lipid IV(A) biosynthesis; lipid IV(A) from (3R)-3-hydroxytetradecanoyl-[acyl-carrier-protein] and UDP-N-acetyl-alpha-D-glucosamine: step 6/6. Functionally, transfers the gamma-phosphate of ATP to the 4'-position of a tetraacyldisaccharide 1-phosphate intermediate (termed DS-1-P) to form tetraacyldisaccharide 1,4'-bis-phosphate (lipid IVA). This chain is Tetraacyldisaccharide 4'-kinase, found in Geobacter metallireducens (strain ATCC 53774 / DSM 7210 / GS-15).